A 242-amino-acid polypeptide reads, in one-letter code: Small ribosomal subunit protein uS7m (242 aa).

A mitochondrion-targeting transit peptide spans 1–37; that stretch reads MAAPALRAPLRWSGLALGVRCAVWNLPGLTQVRGSRY. An N6-acetyllysine modification is found at K228.

Belongs to the universal ribosomal protein uS7 family. In terms of assembly, component of the mitochondrial ribosome small subunit (28S) which comprises a 12S rRNA and about 30 distinct proteins.

The protein resides in the mitochondrion. This chain is Small ribosomal subunit protein uS7m (Mrps7), found in Mus musculus (Mouse).